The following is a 193-amino-acid chain: Peptidyl-tRNA hydrolase (193 aa).

Y18 is a tRNA binding site. Catalysis depends on H23, which acts as the Proton acceptor. F69, N71, and N117 together coordinate tRNA.

Belongs to the PTH family. Monomer.

The protein localises to the cytoplasm. The catalysed reaction is an N-acyl-L-alpha-aminoacyl-tRNA + H2O = an N-acyl-L-amino acid + a tRNA + H(+). Its function is as follows. Hydrolyzes ribosome-free peptidyl-tRNAs (with 1 or more amino acids incorporated), which drop off the ribosome during protein synthesis, or as a result of ribosome stalling. Functionally, catalyzes the release of premature peptidyl moieties from peptidyl-tRNA molecules trapped in stalled 50S ribosomal subunits, and thus maintains levels of free tRNAs and 50S ribosomes. The sequence is that of Peptidyl-tRNA hydrolase from Teredinibacter turnerae (strain ATCC 39867 / T7901).